We begin with the raw amino-acid sequence, 536 residues long: Prolyl 3-hydroxylase sudestada1 (536 aa).

The segment at 1 to 35 (METSSSSPVKPRRKDKDEDGRAEQEDSADQVGEPH) is disordered. A compositionally biased stretch (basic and acidic residues) spans 14–24 (KDKDEDGRAEQ). A Fe2OG dioxygenase domain is found at 165-275 (KLDYVSASCS…RLTINGWFHG (111 aa)). His-185 and Asp-187 together coordinate Fe cation. Residue Tyr-199 participates in 2-oxoglutarate binding. His-254 contributes to the Fe cation binding site. Arg-266 is a binding site for 2-oxoglutarate. The tract at residues 467 to 486 (PTAKAPTDGRRSDYDDEEED) is disordered.

The protein belongs to the TPA1 family. As to quaternary structure, monomer. Fe(2+) serves as cofactor. It depends on L-ascorbate as a cofactor. In third-instar larval tissues,highly expressed in the fat body, with significant expression in other organs including the brain, salivary glands, imaginal disks and gut.

The protein localises to the nucleus. It is found in the cytoplasm. It carries out the reaction [ribosomal protein uS12]-L-proline + 2-oxoglutarate + O2 = [ribosomal protein uS12]-(3S)-3-hydroxy-L-proline + succinate + CO2. Functionally, prolyl 3-hydroxylase that catalyzes 3-hydroxylation of 'Pro-62' of small ribosomal subunit uS12 (RpS23), thereby regulating protein translation termination efficiency. The protein is Prolyl 3-hydroxylase sudestada1 (sud1) of Drosophila melanogaster (Fruit fly).